Here is a 421-residue protein sequence, read N- to C-terminus: Heterogeneous nuclear ribonucleoprotein 27C (421 aa).

2 RRM domains span residues 7-88 (GKLF…RTLQ) and 96-173 (YKVF…KAEP). Disordered regions lie at residues 171–191 (AEPRDGSGGQNSNNSTVGGAY) and 240–373 (GTSP…SEYD). Ser-177 is modified (phosphoserine). The segment covering 240-250 (GTSPQQQQYGY) has biased composition (polar residues). The segment covering 264–273 (PPGPQGPPPQ) has biased composition (pro residues). The span at 275–284 (SNYAGPQQTQ) shows a compositional bias: polar residues. Positions 293–302 (NSTSTGAPSG) are enriched in low complexity. A phosphoserine mark is found at Ser-366, Ser-368, and Ser-370. Residue Tyr-372 is modified to Phosphotyrosine. Ser-379 bears the Phosphoserine mark. Residues 392–421 (EGASNYGAGPRSAYGNDSSTQPPYATSQAV) form a disordered region. The segment covering 406-421 (GNDSSTQPPYATSQAV) has biased composition (polar residues).

As to quaternary structure, interacts with sqd; the interaction is RNA-dependent and may be specific for sqd isoform A/sqdA. Interacts with otu; the interaction is RNA-independent.

It localises to the nucleus. The protein resides in the cytoplasm. This protein is a component of ribonucleosomes. Could be needed to organize a concentration gradient of a dorsalizing morphogen (Dm) originating in the germinal vesicle. Interacts with grk mRNA (via 3' UTR) and involved in its localization to the dorsal anterior region of the oocyte during dorsal-ventral axis determination; may function as a ribonuclear protein complex together with sqd and otu. Required for polytene chromosome dispersal in nurse cells during oogenesis. May be involved in the regulation of splicing. In Drosophila melanogaster (Fruit fly), this protein is Heterogeneous nuclear ribonucleoprotein 27C.